A 992-amino-acid polypeptide reads, in one-letter code: Epstein-Barr nuclear antigen 6 (992 aa).

Residues 1 to 70 (MESFEGQGDS…SRGDENRGWM (70 aa)) are disordered. A compositionally biased stretch (basic and acidic residues) spans 12-31 (QSPDNERGDNVQTTGEHDQD). An interaction with host PIM1 region spans residues 130–159 (LILDSGLDTQHILCFVMAARQRLQDIRRGP). Disordered regions lie at residues 355 to 905 (ATGG…DSMA), 931 to 954 (PLDINATTPKRPRVEESSHGPARC), and 967 to 992 (DNSEISVFPKDAKQTDYDASTESELD). The span at 381–391 (VELESSDDELP) shows a compositional bias: acidic residues. Residues 445–461 (AQSTPERPGPSEQSSVT) show a composition bias toward polar residues. Positions 479–495 (QPPPVPKPVPVKPTPPP) are enriched in pro residues. Over residues 506–520 (YDDDVIEVIDVETTE) the composition is skewed to acidic residues. The 1-1; approximate repeat unit spans residues 551–555 (PPTVS). Positions 551-610 (PPTVSPSDTGPPAVGPPAAGPPAAGPPAAGPPAAGPPAAGPPAAGPRILAPLSAGPPAAG) are 12 X 5 AA approximate tandem repeats of P-P-A-A-G. One copy of the 2-1; approximate repeat lies at 556-560 (PSDTG). A 3-1; approximate repeat occupies 561-565 (PPAVG). Residues 563–594 (AVGPPAAGPPAAGPPAAGPPAAGPPAAGPPAA) show a composition bias toward pro residues. 6 repeat units span residues 566-570 (PPAAG), 571-575 (PPAAG), 576-580 (PPAAG), 581-585 (PPAAG), 586-590 (PPAAG), and 591-595 (PPAAG). Residues 595 to 611 (GPRILAPLSAGPPAAGP) show a composition bias toward low complexity. One copy of the 10-1; approximate repeat lies at 596–600 (PRILA). The stretch at 601–605 (PLSAG) is one 11-1; approximate repeat. Residues 606–610 (PPAAG) form a 12-1 repeat. Polar residues-rich tracts occupy residues 659–676 (TQMQQEPSSHLQSATQPT) and 700–714 (IESSHLSSMSPTQPI). Positions 715-724 (SHEEQPRYED) are enriched in basic and acidic residues. Composition is skewed to low complexity over residues 738 to 764 (AAQPAPQAPYQGYQEPPAPQAPYQGYQ) and 772 to 781 (PYQGYQEPPA). A run of 3 repeats spans residues 741 to 753 (PAPQAPYQGYQEP), 754 to 766 (PAPQAPYQGYQEP), and 767 to 779 (PPPQAPYQGYQEP). The segment at 741-779 (PAPQAPYQGYQEPPAPQAPYQGYQEPPPPQAPYQGYQEP) is 3 X 13 AA tandem repeats of P-[AP]-P-Q-A-P-Y-Q-G-Y-Q-E-P. Over residues 845–857 (DQVSQFPHLQSET) the composition is skewed to polar residues. Residues 859 to 881 (PPRLQLSLVPLVSSSAPSWSSPQ) show a composition bias toward low complexity. The span at 882-899 (PRAPIRPIPTRFPPPPMP) shows a compositional bias: pro residues.

The protein belongs to the herpesviridae EBNA-6 family. Interacts with host CTPB1; this interaction leads to gene repression, but also seems to interfere with the repressive function of CtBP pre-bound to DNA, leading to EBNA6 mediated up-regulation of many host genes. Interacts with host MYC; this interaction enhances MYC stability. Interacts (via N-terminus) with host RBPJ. Interacts (via N-terminus) with host histone H2AX; this interaction facilitates H2AX proteasomal degradation. Interacts with host TP73; this interaction inhibits TP73-mediated apoptotic pathway. Interacts (via N-terminus) with host PIM1; this interaction upregulates and stabilizes PIM1 and induces cell proliferation by inhibiting the growth suppressive properties of p21.

It localises to the host nucleus. It is found in the host nucleus matrix. Plays an essential role for the activation and immortalization of human B-cells. Represses transcription of viral promoters TP1 and Cp through interaction with host RBPJ, and inhibits EBNA2-mediated activation of these promoters. Targets host chromatin through interactions with host transcription factors, especially RBPJ and IRF4. Alternatively, EBNA6 also regulates the transcription of the EBV oncogene LMP1 in a cell cycle-dependent manner. Modulates the activity of several host proteins involved in cell cycle regulation including host cyclin A, MYC, RB, p21 and p27 mainly through binding to the host SCF(SKP2) complex. Inhibits the promoter of host H2AX and targets H2AX to proteasomal degradation in order to promote latency and cell proliferation. Upregulates host PIM1 expression and stabilization. Potentiates PIM1 to promote cell proliferation by inhibiting the growth suppressive properties of p21. In Epstein-Barr virus (strain B95-8) (HHV-4), this protein is Epstein-Barr nuclear antigen 6 (EBNA6).